The primary structure comprises 486 residues: tRNA sulfurtransferase (486 aa).

The THUMP domain maps to 60-166 (QKICAMLINI…DNQLFIIIKR (107 aa)). ATP-binding positions include 184–185 (LI), lysine 266, glycine 288, and glutamine 297. A disulfide bridge links cysteine 345 with cysteine 458. Positions 406 to 484 (LDSTDVVLDI…GFSNVKIYRP (79 aa)) constitute a Rhodanese domain. Cysteine 458 acts as the Cysteine persulfide intermediate in catalysis.

Belongs to the ThiI family.

It localises to the cytoplasm. It carries out the reaction [ThiI sulfur-carrier protein]-S-sulfanyl-L-cysteine + a uridine in tRNA + 2 reduced [2Fe-2S]-[ferredoxin] + ATP + H(+) = [ThiI sulfur-carrier protein]-L-cysteine + a 4-thiouridine in tRNA + 2 oxidized [2Fe-2S]-[ferredoxin] + AMP + diphosphate. The catalysed reaction is [ThiS sulfur-carrier protein]-C-terminal Gly-Gly-AMP + S-sulfanyl-L-cysteinyl-[cysteine desulfurase] + AH2 = [ThiS sulfur-carrier protein]-C-terminal-Gly-aminoethanethioate + L-cysteinyl-[cysteine desulfurase] + A + AMP + 2 H(+). It participates in cofactor biosynthesis; thiamine diphosphate biosynthesis. Catalyzes the ATP-dependent transfer of a sulfur to tRNA to produce 4-thiouridine in position 8 of tRNAs, which functions as a near-UV photosensor. Also catalyzes the transfer of sulfur to the sulfur carrier protein ThiS, forming ThiS-thiocarboxylate. This is a step in the synthesis of thiazole, in the thiamine biosynthesis pathway. The sulfur is donated as persulfide by IscS. The protein is tRNA sulfurtransferase of Blochmanniella pennsylvanica (strain BPEN).